Here is a 350-residue protein sequence, read N- to C-terminus: Transcription factor MYB102 (350 aa).

HTH myb-type domains follow at residues 9 to 65 (KNGL…RPDI) and 66 to 116 (KRGR…RKKL). DNA-binding regions (H-T-H motif) lie at residues 37 to 61 (WRTL…TNYL) and 89 to 112 (WSAI…NTHI).

Expressed in rosette leaves, cauline leaves and flowers.

The protein localises to the nucleus. In terms of biological role, probable transcription factor that may function in osmotic stress and wounding signaling pathways. Contributes to basal resistance against the herbivore Pieris rapae (white cabbage butterfly) feeding. In Arabidopsis thaliana (Mouse-ear cress), this protein is Transcription factor MYB102.